The primary structure comprises 2798 residues: Kinesin-like protein KIN-12F (2798 aa).

A disordered region spans residues 1–165 (MVRDLAAVRR…RPPMSSGQRG (165 aa)). 2 stretches are compositionally biased toward low complexity: residues 8 to 22 (VRRTPARASTSSSAS) and 31 to 58 (PVDASDAAVVEPEAAAARPPLLAIQPPQ). Positions 210 to 547 (NVQVVIRVRP…LKFAQRARLI (338 aa)) constitute a Kinesin motor domain. 291 to 298 (GQTGSGKT) contributes to the ATP binding site. Positions 600-615 (DVDDGTESMNMDEEND) are enriched in acidic residues. Residues 600–621 (DVDDGTESMNMDEENDNDAHDR) are disordered. 5 coiled-coil regions span residues 792-835 (ELKR…HSSN), 890-987 (LAEE…HRRQ), 1014-1108 (LKRM…VMKE), 1281-1322 (QRAM…LKNE), and 2130-2333 (ELVD…VRQQ). A disordered region spans residues 2338–2359 (PSSGQATSSLEGGMGDFTDSSR). Coiled coils occupy residues 2361-2427 (SREI…VKSD) and 2545-2758 (ESKE…LKLK). Positions 2772-2798 (RSESSSLSSGRSRSPSVCRSPSISSFR) are disordered. A compositionally biased stretch (low complexity) spans 2774–2798 (ESSSLSSGRSRSPSVCRSPSISSFR).

It belongs to the TRAFAC class myosin-kinesin ATPase superfamily. Kinesin family. KIN-12 subfamily.

This is Kinesin-like protein KIN-12F from Oryza sativa subsp. japonica (Rice).